The chain runs to 258 residues: Putative ankyrin repeat domain-containing protein 30B-like (258 aa).

The segment at M1–F21 is disordered. ANK repeat units lie at residues K71–V100, E104–I133, Y137–V166, and A170–A199. The interval K216–E258 is disordered. Residues S218–G232 show a composition bias toward polar residues. Over residues R243 to E258 the composition is skewed to basic and acidic residues.

This is Putative ankyrin repeat domain-containing protein 30B-like (ANKRD30BL) from Homo sapiens (Human).